A 511-amino-acid chain; its full sequence is Kinesin-like protein 8 (511 aa).

A Kinesin motor domain is found at 5 to 356 (NVRVIVRVRP…LRYSEAARRI (352 aa)). 107–114 (GQKGTGKT) contacts ATP. Residues Ser-278, Ser-279, Ser-284, and Ser-456 each carry the phosphoserine modification. A coiled-coil region spans residues 373-489 (EGELDDILTT…KLVKSQLHDY (117 aa)).

It belongs to the TRAFAC class myosin-kinesin ATPase superfamily. Kinesin family.

It localises to the cytoplasm. The protein resides in the cytoskeleton. In Schizosaccharomyces pombe (strain 972 / ATCC 24843) (Fission yeast), this protein is Kinesin-like protein 8 (klp8).